We begin with the raw amino-acid sequence, 124 residues long: Small ribosomal subunit protein uS13 (124 aa).

The segment covering 93–117 (KNLPVRGQRTRTNARTRKGPRKTVA) has biased composition (basic residues). The interval 93 to 124 (KNLPVRGQRTRTNARTRKGPRKTVANKKIESK) is disordered.

This sequence belongs to the universal ribosomal protein uS13 family. In terms of assembly, part of the 30S ribosomal subunit. Forms a loose heterodimer with protein S19. Forms two bridges to the 50S subunit in the 70S ribosome.

Its function is as follows. Located at the top of the head of the 30S subunit, it contacts several helices of the 16S rRNA. In the 70S ribosome it contacts the 23S rRNA (bridge B1a) and protein L5 of the 50S subunit (bridge B1b), connecting the 2 subunits; these bridges are implicated in subunit movement. Contacts the tRNAs in the A and P-sites. The sequence is that of Small ribosomal subunit protein uS13 from Mycoplasma genitalium (strain ATCC 33530 / DSM 19775 / NCTC 10195 / G37) (Mycoplasmoides genitalium).